A 310-amino-acid polypeptide reads, in one-letter code: O-acetylserine sulfhydrylase (310 aa).

N6-(pyridoxal phosphate)lysine is present on Lys44. Pyridoxal 5'-phosphate contacts are provided by residues Asn74, 178-182 (GTGGT), and Ser266.

This sequence belongs to the cysteine synthase/cystathionine beta-synthase family. As to quaternary structure, homodimer. It depends on pyridoxal 5'-phosphate as a cofactor.

The catalysed reaction is O-acetyl-L-serine + hydrogen sulfide = L-cysteine + acetate. It participates in amino-acid biosynthesis; L-cysteine biosynthesis; L-cysteine from L-serine: step 2/2. In terms of biological role, catalyzes the conversion of O-acetylserine (OAS) to cysteine through the elimination of acetate and addition of hydrogen sulfide. This is O-acetylserine sulfhydrylase (cysK) from Mycobacterium bovis (strain ATCC BAA-935 / AF2122/97).